A 288-amino-acid chain; its full sequence is Acetyl-coenzyme A carboxylase carboxyl transferase subunit beta (288 aa).

One can recognise a CoA carboxyltransferase N-terminal domain in the interval 30-288 (IMTKCPKCKK…KLHQEVKKDA (259 aa)). Residues Cys-34, Cys-37, Cys-53, and Cys-56 each contribute to the Zn(2+) site. The C4-type zinc-finger motif lies at 34–56 (CPKCKKIMYTKELNENLNVCFNC).

This sequence belongs to the AccD/PCCB family. In terms of assembly, acetyl-CoA carboxylase is a heterohexamer composed of biotin carboxyl carrier protein (AccB), biotin carboxylase (AccC) and two subunits each of ACCase subunit alpha (AccA) and ACCase subunit beta (AccD). Zn(2+) serves as cofactor.

It localises to the cytoplasm. The catalysed reaction is N(6)-carboxybiotinyl-L-lysyl-[protein] + acetyl-CoA = N(6)-biotinyl-L-lysyl-[protein] + malonyl-CoA. It participates in lipid metabolism; malonyl-CoA biosynthesis; malonyl-CoA from acetyl-CoA: step 1/1. Component of the acetyl coenzyme A carboxylase (ACC) complex. Biotin carboxylase (BC) catalyzes the carboxylation of biotin on its carrier protein (BCCP) and then the CO(2) group is transferred by the transcarboxylase to acetyl-CoA to form malonyl-CoA. This chain is Acetyl-coenzyme A carboxylase carboxyl transferase subunit beta, found in Staphylococcus haemolyticus (strain JCSC1435).